Reading from the N-terminus, the 138-residue chain is Endoribonuclease YbeY (138 aa).

Zn(2+)-binding residues include histidine 106, histidine 110, and aspartate 116.

It belongs to the endoribonuclease YbeY family. Zn(2+) is required as a cofactor.

Its subcellular location is the cytoplasm. In terms of biological role, single strand-specific metallo-endoribonuclease involved in late-stage 70S ribosome quality control and in maturation of the 3' terminus of the 16S rRNA. This Phocaeicola vulgatus (strain ATCC 8482 / DSM 1447 / JCM 5826 / CCUG 4940 / NBRC 14291 / NCTC 11154) (Bacteroides vulgatus) protein is Endoribonuclease YbeY.